Consider the following 412-residue polypeptide: Gamma-glutamyl phosphate reductase (412 aa).

This sequence belongs to the gamma-glutamyl phosphate reductase family.

It is found in the cytoplasm. The enzyme catalyses L-glutamate 5-semialdehyde + phosphate + NADP(+) = L-glutamyl 5-phosphate + NADPH + H(+). It participates in amino-acid biosynthesis; L-proline biosynthesis; L-glutamate 5-semialdehyde from L-glutamate: step 2/2. Its function is as follows. Catalyzes the NADPH-dependent reduction of L-glutamate 5-phosphate into L-glutamate 5-semialdehyde and phosphate. The product spontaneously undergoes cyclization to form 1-pyrroline-5-carboxylate. The polypeptide is Gamma-glutamyl phosphate reductase (Nitratiruptor sp. (strain SB155-2)).